A 710-amino-acid chain; its full sequence is MEDDGKSPPDSAYGEPKKYDPNFKGPIQNRGCTDILCCILIVLGIIAYVAVGIVAWTYGDPRKVIYPTDSKGQFCGQVGTPNEKKPFLFYFNIMKCASPLVLLQFQCPTTQICVENCPDRFLTYLSVATTQQNFDYYKQFCRDGFNNFTKSPVEVLRDRDCPAMITPSKPFTRRCFPAINTQKGVVMVGNSTTFDDGRGDKQRNVTDLLEGAKKANVVLEARQVAMKIFEDYTVSWYWIIIGLIIAMVISLIFVVLLRFLAGIMVWVMIVLVIAVMGYGIFHCYMEYARLKGQSGSDVTLKDIGFQTDIRVYLHLRQTWLAFMIILCILEVIVILLLIFLRKRIMIAIALIKEASRAVGFVMSSLVFPLFTFLLVCLCIAYWAITAVFLSTSNEAVYKVFNETQCDFSGNTCNPETFNTTNVTRVCPDATCQFAFYGGETYYHKYLIVFQIYNAFMFLWLANFVIALGQVTLAGAFASYYWAFKKPDDMPAFPIFSSLGRALRYHTGSLAFGSLILAIVQMIRILLEYLDHKLKGADNKCARFLLCCLKCCFWCLEKFIKFLNRNAYIMIAIYGTNFCTSARNAFFLLMRNIIRVAVLDKVTDFLLFLGKLLVVGCVGILAFFFFSRRIQIVQDTAPTLNYYWVPILTVILGSYLIAHGFFSVYGMCVDTLFLCFLEDLERNDGSTERPYFMSGSLQKLLNKSNQTKPDK.

The Cytoplasmic portion of the chain corresponds to Met-1–Asp-34. The chain crosses the membrane as a helical span at residues Ile-35–Ala-55. At Trp-56–Trp-236 the chain is on the extracellular side. N-linked (GlcNAc...) asparagine glycans are attached at residues Asn-147, Asn-190, and Asn-204. The chain crosses the membrane as a helical span at residues Tyr-237 to Leu-257. At Arg-258–Leu-260 the chain is on the cytoplasmic side. A helical membrane pass occupies residues Ala-261–Phe-281. Residues His-282–Trp-319 are Extracellular-facing. The chain crosses the membrane as a helical span at residues Leu-320–Leu-340. Residues Arg-341–Pro-368 are Cytoplasmic-facing. A helical transmembrane segment spans residues Leu-369 to Leu-389. Over Ser-390–Leu-458 the chain is Extracellular. 3 N-linked (GlcNAc...) asparagine glycosylation sites follow: Asn-401, Asn-418, and Asn-421. The helical transmembrane segment at Trp-459 to Trp-481 threads the bilayer. Residues Ala-482–Ser-508 are Cytoplasmic-facing. Residues Leu-509 to Leu-529 traverse the membrane as a helical segment. The Extracellular segment spans residues Asp-530–Tyr-567. Residues Ile-568 to Leu-588 traverse the membrane as a helical segment. Residues Met-589–Asp-603 lie on the Cytoplasmic side of the membrane. The chain crosses the membrane as a helical span at residues Phe-604–Phe-624. At Phe-625–Tyr-642 the chain is on the extracellular side. The helical transmembrane segment at Trp-643–Val-663 threads the bilayer. Over Tyr-664 to Lys-710 the chain is Cytoplasmic.

Belongs to the CTL (choline transporter-like) family.

Its subcellular location is the cell membrane. It is found in the mitochondrion outer membrane. It catalyses the reaction choline(out) + n H(+)(in) = choline(in) + n H(+)(out). The enzyme catalyses ethanolamine(out) + n H(+)(in) = ethanolamine(in) + n H(+)(out). Choline/H+ antiporter, mainly in mitochodria. Also acts as a low-affinity ethanolamine/H+ antiporter, regulating the supply of extracellular ethanolamine (Etn) for the CDP-Etn pathway, redistribute intracellular Etn and balance the CDP-Cho and CDP-Etn arms of the Kennedy pathway. The protein is Choline transporter-like protein 2 (slc44a2) of Xenopus laevis (African clawed frog).